The following is a 740-amino-acid chain: ATP-dependent zinc metalloprotease YME1L (740 aa).

Residues 1–256 (MFSTTTHSVP…KSGKTMKYLK (256 aa)) are Mitochondrial matrix-facing. The helical transmembrane segment at 257-277 (TLQTIVVIVVFLGIFLSFFTT) threads the bilayer. At 278–740 (SNGSVFRSIQ…IKAILNESQT (463 aa)) the chain is on the mitochondrial intermembrane side. Position 347-351 (347-351 (GTGKT)) interacts with ATP. Residue histidine 563 coordinates Zn(2+). Glutamate 564 is a catalytic residue. Zn(2+)-binding residues include histidine 567 and aspartate 641.

It in the N-terminal section; belongs to the AAA ATPase family. In the C-terminal section; belongs to the peptidase M41 family. Zn(2+) serves as cofactor.

The protein resides in the mitochondrion inner membrane. ATP-dependent metalloprotease that catalyzes the degradation of folded and unfolded proteins with a suitable degron sequence in the mitochondrial intermembrane region. Plays an important role in regulating mitochondrial morphology and function by cleaving Opa1, giving rise to a form of Opa1 that promotes maintenance of normal mitochondrial structure and mitochondrial protein metabolism. Ensures cell proliferation, maintains normal cristae morphology and complex I respiration activity, promotes antiapoptotic activity and protects mitochondria from the accumulation of oxidatively damaged membrane proteins. Required to control the accumulation of nonassembled respiratory chain subunits such as ND-30. The sequence is that of ATP-dependent zinc metalloprotease YME1L from Drosophila melanogaster (Fruit fly).